The chain runs to 1222 residues: ATP-dependent helicase/nuclease subunit A (1222 aa).

A UvrD-like helicase ATP-binding domain is found at 39–495 (QKRTAQQIEA…ILLKENFRSQ (457 aa)). 60 to 67 (ASAGSGKT) lines the ATP pocket. The 287-residue stretch at 524–810 (QLIAGSHAQT…NLMTIHKSKG (287 aa)) folds into the UvrD-like helicase C-terminal domain.

Belongs to the helicase family. AddA subfamily. In terms of assembly, heterodimer of AddA and AddB/RexB. Requires Mg(2+) as cofactor.

The enzyme catalyses Couples ATP hydrolysis with the unwinding of duplex DNA by translocating in the 3'-5' direction.. It catalyses the reaction ATP + H2O = ADP + phosphate + H(+). Its function is as follows. The heterodimer acts as both an ATP-dependent DNA helicase and an ATP-dependent, dual-direction single-stranded exonuclease. Recognizes the chi site generating a DNA molecule suitable for the initiation of homologous recombination. The AddA nuclease domain is required for chi fragment generation; this subunit has the helicase and 3' -&gt; 5' nuclease activities. The protein is ATP-dependent helicase/nuclease subunit A of Streptococcus pyogenes serotype M28 (strain MGAS6180).